The primary structure comprises 427 residues: Adenylosuccinate synthetase (427 aa).

GTP is bound by residues 13 to 19 (GDEGKGK) and 41 to 43 (GHT). Asp14 acts as the Proton acceptor in catalysis. 2 residues coordinate Mg(2+): Asp14 and Gly41. Residues 14–17 (DEGK), 39–42 (NAGH), Thr129, Arg143, Gln224, Thr239, and Arg303 each bind IMP. His42 (proton donor) is an active-site residue. A disordered region spans residues 117-137 (QEKQRGEESLGTTKRGIGPAY). Residue 299-305 (TTTGRPR) participates in substrate binding. Residues Arg305, 331-333 (KLD), and 414-416 (GTG) contribute to the GTP site.

Belongs to the adenylosuccinate synthetase family. In terms of assembly, homodimer. Requires Mg(2+) as cofactor.

It is found in the cytoplasm. It catalyses the reaction IMP + L-aspartate + GTP = N(6)-(1,2-dicarboxyethyl)-AMP + GDP + phosphate + 2 H(+). Its pathway is purine metabolism; AMP biosynthesis via de novo pathway; AMP from IMP: step 1/2. Its function is as follows. Plays an important role in the de novo pathway of purine nucleotide biosynthesis. Catalyzes the first committed step in the biosynthesis of AMP from IMP. The polypeptide is Adenylosuccinate synthetase (Caldicellulosiruptor saccharolyticus (strain ATCC 43494 / DSM 8903 / Tp8T 6331)).